The following is a 75-amino-acid chain: Small ribosomal subunit protein bS18 (75 aa).

Belongs to the bacterial ribosomal protein bS18 family. In terms of assembly, part of the 30S ribosomal subunit. Forms a tight heterodimer with protein bS6.

Functionally, binds as a heterodimer with protein bS6 to the central domain of the 16S rRNA, where it helps stabilize the platform of the 30S subunit. The polypeptide is Small ribosomal subunit protein bS18 (Dinoroseobacter shibae (strain DSM 16493 / NCIMB 14021 / DFL 12)).